The sequence spans 269 residues: Nuclear egress protein 2 (269 aa).

Over 1–247 (MSRRTYVRSE…VWKLALPVAN (247 aa)) the chain is Perinuclear space. A helical transmembrane segment spans residues 248–268 (VTYALFIVIVLVVVLGAVLFW). Position 269 (lysine 269) is a topological domain, nuclear.

This sequence belongs to the herpesviridae NEC2 protein family. In terms of assembly, forms a heterohexameric complex with NEC1. In terms of processing, phosphorylated.

The protein resides in the host nucleus inner membrane. Functionally, plays an essential role in virion nuclear egress, the first step of virion release from infected cell. Within the host nucleus, NEC1 interacts with the newly formed capsid through the vertexes and directs it to the inner nuclear membrane by associating with NEC2. Induces the budding of the capsid at the inner nuclear membrane as well as its envelopment into the perinuclear space. There, the NEC1/NEC2 complex promotes the fusion of the enveloped capsid with the outer nuclear membrane and the subsequent release of the viral capsid into the cytoplasm where it will reach the secondary budding sites in the host Golgi or trans-Golgi network. This is Nuclear egress protein 2 from Homo sapiens (Human).